Reading from the N-terminus, the 459-residue chain is WPP domain-interacting protein 3 (459 aa).

Positions 1–17 (MNESVPDSVEDNGNSVP) are enriched in polar residues. Positions 1–78 (MNESVPDSVE…GPVRDEAAPV (78 aa)) are disordered. Basic residues predominate over residues 52–66 (STRKGFGLKKWRRIK). Short sequence motifs (nuclear localization signal) lie at residues 60-61 (KK) and 63-64 (RR). Basic and acidic residues predominate over residues 67–78 (RDGPVRDEAAPV). The Nuclear localization signal 3 motif lies at 86-87 (KR). 2 disordered regions span residues 240–266 (KEEV…NNNH) and 308–330 (TDEL…TSSG). Residues 251–266 (NGNKEDDGESKKNNNH) show a composition bias toward basic and acidic residues. A compositionally biased stretch (polar residues) spans 308–319 (TDELSSDQPSHQ). A coiled-coil region spans residues 331–375 (SKALILKEKVKLLEHKLEEARAALEAKEARIQELENSKIESELEC). Residues 426-459 (KLGFYILTQLILLVSILRFLVLQFSPASRLVIPT) enclose the KASH domain. Residues 427 to 447 (LGFYILTQLILLVSILRFLVL) form a helical membrane-spanning segment.

In terms of assembly, component of Ran complexes at least composed of WIT1 or WIT2, RANGAP1 or RANGAP2, and WIP1 or WIP2 or WIP3. Interacts with RANGAP1, WPP1/MAF1, and WPP2/MAF2. Interacts with SUN1 and SUN2. Core component of the LINC complex which is composed of inner nuclear membrane SUN domain-containing proteins coupled to outer nuclear membrane WIP and WIT proteins. The LINC complex also involves nucleoskeletal proteins CRWN/LINC and possibly KAKU4 and the cytoskeletal myosin KAKU1. Interacts with WIT2. In terms of tissue distribution, expressed in seedlings, roots, stems, leaves, and flowers.

It is found in the nucleus envelope. Its subcellular location is the nucleus membrane. Mediates and enhances the nuclear envelope docking of RANGAP proteins mediated by WIT1 and WIT2 in the undifferentiated cells of root tips. As component of the SUN-WIP-WIT2-KAKU1 complex, mediates the transfer of cytoplasmic forces to the nuclear envelope (NE), leading to nuclear shape changes. The polypeptide is WPP domain-interacting protein 3 (WIP3) (Arabidopsis thaliana (Mouse-ear cress)).